Reading from the N-terminus, the 276-residue chain is Protein TabB (276 aa).

Belongs to the transferase hexapeptide repeat family. Pyridoxal 5'-phosphate is required as a cofactor.

The polypeptide is Protein TabB (tabB) (Pseudomonas amygdali pv. tabaci (Pseudomonas syringae pv. tabaci)).